Reading from the N-terminus, the 72-residue chain is Protein kish-A (72 aa).

Positions 1 to 26 are cleaved as a signal peptide; that stretch reads MSAIFNFQSLLIVILLLICTCAYLRS. The Extracellular portion of the chain corresponds to 27 to 53; sequence LVPNLLDKNKTGVLGIFWKCARIGERK. Residue asparagine 35 is glycosylated (N-linked (GlcNAc...) asparagine). The chain crosses the membrane as a helical span at residues 54–71; the sequence is SPYVAVCCVVMAFSILFM. Position 72 (glutamine 72) is a topological domain, cytoplasmic.

The protein belongs to the KISH family.

The protein localises to the golgi apparatus membrane. In terms of biological role, involved in the early part of the secretory pathway. The sequence is that of Protein kish-A (tmem167a) from Xenopus laevis (African clawed frog).